A 368-amino-acid polypeptide reads, in one-letter code: Microtubule-associated protein Jupiter (368 aa).

S30 is modified (phosphoserine). T41 carries the phosphothreonine modification. Residues 81–93 are compositionally biased toward basic and acidic residues; sequence RRGQKSVDSHSRL. The interval 81–106 is disordered; the sequence is RRGQKSVDSHSRLFGEPSRPITPGKN. T102 is modified (phosphothreonine). Phosphoserine occurs at positions 111, 146, and 157. Composition is skewed to low complexity over residues 129-157 and 238-248; these read NGNT…VSSS and GRYGYSSQSRR. 3 disordered regions span residues 129–164, 196–256, and 316–368; these read NGNT…LKIN, SQGN…SPLN, and KPKK…SGLW. The span at 337-354 shows a compositional bias: polar residues; sequence GSDSAQTPTMNGANQVIN.

Belongs to the MAP Jupiter family.

It is found in the nucleus. The protein localises to the cytoplasm. Its subcellular location is the cytoskeleton. The protein resides in the spindle. Binds to all microtubule populations. The protein is Microtubule-associated protein Jupiter of Drosophila willistoni (Fruit fly).